A 409-amino-acid chain; its full sequence is N-acetylglucosamine-6-phosphate deacetylase (409 aa).

Glutamate 143 contacts a divalent metal cation. Residue 154–155 participates in substrate binding; it reads AH. Residues histidine 211 and histidine 232 each coordinate a divalent metal cation. Substrate is bound by residues 235 to 236, arginine 243, and 269 to 272; these read NA and DGIH. Residue aspartate 294 is the Proton donor/acceptor of the active site. 328-330 provides a ligand contact to substrate; that stretch reads LSG.

Belongs to the metallo-dependent hydrolases superfamily. NagA family. Requires a divalent metal cation as cofactor.

The enzyme catalyses N-acetyl-D-glucosamine 6-phosphate + H2O = D-glucosamine 6-phosphate + acetate. The protein operates within amino-sugar metabolism; N-acetylneuraminate degradation. Its function is as follows. Hydrolyzes the N-glycolyl group from N-glycolylglucosamine 6-phosphate (GlcNGc-6-P) in the N-glycolylneuraminic acid (Neu5Gc) degradation pathway. In Bos taurus (Bovine), this protein is N-acetylglucosamine-6-phosphate deacetylase (AMDHD2).